Reading from the N-terminus, the 599-residue chain is Prostaglandin G/H synthase 1 (599 aa).

Residues methionine 1–leucine 23 form the signal peptide. The EGF-like domain occupies proline 31 to threonine 69. 4 disulfides stabilise this stretch: cysteine 35/cysteine 46, cysteine 36/cysteine 158, cysteine 40/cysteine 56, and cysteine 58/cysteine 68. Asparagine 67, asparagine 103, and asparagine 143 each carry an N-linked (GlcNAc...) asparagine glycan. The Proton acceptor role is filled by histidine 206. Tyrosine 384 acts as the For cyclooxygenase activity in catalysis. Histidine 387 contributes to the heme b binding site. A disulfide bond links cysteine 568 and cysteine 574.

This sequence belongs to the prostaglandin G/H synthase family. In terms of assembly, homodimer. It depends on heme b as a cofactor.

It is found in the microsome membrane. It localises to the endoplasmic reticulum membrane. It catalyses the reaction (5Z,8Z,11Z,14Z)-eicosatetraenoate + AH2 + 2 O2 = prostaglandin H2 + A + H2O. It carries out the reaction (5Z,8Z,11Z,14Z)-eicosatetraenoate + 2 O2 = prostaglandin G2. The enzyme catalyses prostaglandin G2 + AH2 = prostaglandin H2 + A + H2O. The catalysed reaction is (9Z,12Z)-octadecadienoate + AH2 + O2 = (9R)-hydroxy-(10E,12Z)-octadecadienoate + A + H2O. It catalyses the reaction (9Z,12Z)-octadecadienoate + AH2 + O2 = (9S)-hydroxy-(10E,12Z)-octadecadienoate + A + H2O. It carries out the reaction (9Z,12Z)-octadecadienoate + AH2 + O2 = (13S)-hydroxy-(9Z,11E)-octadecadienoate + A + H2O. The enzyme catalyses (9Z,12Z)-octadecadienoate + AH2 + O2 = (13R)-hydroxy-(9Z,11E)-octadecadienoate + A + H2O. It participates in lipid metabolism; prostaglandin biosynthesis. Its activity is regulated as follows. The cyclooxygenase activity is inhibited by nonsteroidal anti-inflammatory drugs (NSAIDs) including ibuprofen, flurbiprofen, ketoprofen, naproxen, flurbiprofen, anirolac, fenclofenac and diclofenac. Dual cyclooxygenase and peroxidase that plays an important role in the biosynthesis pathway of prostanoids, a class of C20 oxylipins mainly derived from arachidonate ((5Z,8Z,11Z,14Z)-eicosatetraenoate, AA, C20:4(n-6)), with a particular role in the inflammatory response. The cyclooxygenase activity oxygenates AA to the hydroperoxy endoperoxide prostaglandin G2 (PGG2), and the peroxidase activity reduces PGG2 to the hydroxy endoperoxide prostaglandin H2 (PGH2), the precursor of all 2-series prostaglandins and thromboxanes. This complex transformation is initiated by abstraction of hydrogen at carbon 13 (with S-stereochemistry), followed by insertion of molecular O2 to form the endoperoxide bridge between carbon 9 and 11 that defines prostaglandins. The insertion of a second molecule of O2 (bis-oxygenase activity) yields a hydroperoxy group in PGG2 that is then reduced to PGH2 by two electrons. Involved in the constitutive production of prostanoids in particular in the stomach and platelets. In gastric epithelial cells, it is a key step in the generation of prostaglandins, such as prostaglandin E2 (PGE2), which plays an important role in cytoprotection. In platelets, it is involved in the generation of thromboxane A2 (TXA2), which promotes platelet activation and aggregation, vasoconstriction and proliferation of vascular smooth muscle cells. Can also use linoleate (LA, (9Z,12Z)-octadecadienoate, C18:2(n-6)) as substrate and produce hydroxyoctadecadienoates (HODEs) in a regio- and stereospecific manner, being (9R)-HODE ((9R)-hydroxy-(10E,12Z)-octadecadienoate) and (13S)-HODE ((13S)-hydroxy-(9Z,11E)-octadecadienoate) its major products. The sequence is that of Prostaglandin G/H synthase 1 from Homo sapiens (Human).